We begin with the raw amino-acid sequence, 1143 residues long: uncharacterized protein (1143 aa).

The first 20 residues, 1–20 (MKLLLLALILVLSNINLISG), serve as a signal peptide directing secretion. The Extracellular segment spans residues 21–1121 (NGLVWPHPRL…PAAGGEDSSA (1101 aa)). The span at 177-203 (NSGGSWSSGGSGNSGGGWSSGGSGNSG) shows a compositional bias: gly residues. Positions 177 to 1120 (NSGGSWSSGG…EPAAGGEDSS (944 aa)) are disordered. Over residues 222 to 236 (SSGGWTSGSHSSGSW) the composition is skewed to low complexity. Positions 237–283 (SSGGGSGSSSGGQSSGSWSSGGGSSSGGHSSGSWSSGGGSSAGGGSS) are enriched in gly residues. The span at 284-296 (SGSHSSGSWSSGG) shows a compositional bias: low complexity. The segment covering 297–330 (SSSGGQSSGSWSSGGGSSSGGQSSGSWSSGGGSS) has biased composition (gly residues). Residues 331-368 (SGSHSSGSWSSGGSSSGSHSSGSWSSGGSSSSSGNSGW) show a composition bias toward low complexity. Gly residues predominate over residues 374–392 (GNTGGNTGGNTGGNTGGQS). A compositionally biased stretch (low complexity) spans 393–403 (SGNSGWMTASG). Gly residues-rich tracts occupy residues 404–418 (GNTG…GGQS) and 430–444 (GNTG…GGQS). Low complexity-rich tracts occupy residues 445-498 (SGSS…TSSG) and 506-541 (GSSS…SSGD). 6 stretches are compositionally biased toward gly residues: residues 555–573 (GNTG…GGNS), 580–596 (GNSG…GGNS), 604–622 (GNTG…GGNS), 629–783 (GNSG…GGNS), 790–843 (GNSG…GGAS), and 851–905 (GNSG…GGNS). Residues 906 to 1059 (GAATGANSGA…GGNGASGAAN (154 aa)) are compositionally biased toward low complexity. A compositionally biased stretch (polar residues) spans 1062-1078 (SIVTPNDQNVSPLSNSD). Positions 1094–1114 (PTSRAPTVTPTPTSSAEEPAA) are enriched in low complexity. A helical membrane pass occupies residues 1122–1142 (ISKYSIQSFGIFVLSMIIYLV). Isoleucine 1143 is a topological domain (cytoplasmic).

The protein resides in the membrane. This is an uncharacterized protein from Dictyostelium discoideum (Social amoeba).